A 261-amino-acid chain; its full sequence is X-box-binding protein 1 (261 aa).

Over 1 to 185 the chain is Cytoplasmic; it reads MVVVAAAPNP…VQAQLSPLQN (185 aa). The interval 44–93 is disordered; sequence RGASPEAASGGLPQARKRQRLTHLSPEEKALRRKLKNRVAAQTARDRKKA. Ser-47 and Ser-68 each carry phosphoserine. The bZIP domain maps to 70–133; the sequence is EEKALRRKLK…HGLVVENQEL (64 aa). The segment at 72–94 is basic motif; that stretch reads KALRRKLKNRVAAQTARDRKKAR. The tract at residues 75-92 is nuclear localization signal (NLS); in isoforms 1 and isoform 2; it reads RRKLKNRVAAQTARDRKK. The tract at residues 98–133 is leucine-zipper; sequence LEQQVVDLEEENQKLLLENQLLREKTHGLVVENQEL. The helical; Signal-anchor for type II membrane protein transmembrane segment at 186-203 threads the bilayer; sequence ISPWILAVLTLQIQSLIS. Topologically, residues 204 to 261 are lumenal; sequence CWAFWTTWTQSCSSNALPQSLPAWRSSQRSTQKDPVPYQPPFLCQWGRHQPSWKPLMN. Positions 235–261 are necessary for the translational pausing of its own mRNA; sequence QKDPVPYQPPFLCQWGRHQPSWKPLMN.

This sequence belongs to the bZIP family. Isoform 2 interacts with SIRT1. Isoform 2 interacts with PIK3R1 and PIK3R2; the interactions are direct and induce translocation of XBP1 isoform 2 into the nucleus and the unfolded protein response (UPR) XBP1-dependent target genes activation in a ER stress- and/or insulin-dependent but PI3K-independent manner. Isoform 2 interacts with FOXO1; the interaction is direct and leads to FOXO1 ubiquitination and degradation via the proteasome pathway in hepatocytes. Isoform 1 interacts with HM13. Isoform 1 interacts with RNF139; the interaction induces ubiquitination and degradation of isoform 1. Isoform 1 interacts (via luminal domain) with DERL1; the interaction obviates the need for ectodomain shedding prior HM13/SPP-mediated XBP1 isoform 1 cleavage. Isoform 1 interacts with isoform 2; the interaction sequesters isoform 2 from the nucleus and enhances isoform 2 degradation in the cytoplasm. Isoform 1 interacts with HDAC3 and AKT1; the interactions occur in endothelial cell (EC) under disturbed flow. Isoform 1 interacts with the oncoprotein FOS. Isoform 2 interacts with ATF6; the interaction occurs in a ER stress-dependent manner and is required for DNA binding to the unfolded protein response element (UPRE). Isoform 2 interacts with PIK3R1; the interaction is direct and induces translocation of XBP1 isoform 2 into the nucleus and the unfolded protein response (UPR) XBP1-dependent target genes activation in a ER stress- and/or insulin-dependent but PI3K-independent manner. Post-translationally, acetylated by EP300; acetylation positively regulates the transcriptional activity of XBP1 isoform 2. Isoform 2 is deacetylated by SIRT1; deacetylation negatively regulates the transcriptional activity of XBP1 isoform 2. In terms of processing, ubiquitinated, leading to proteasome-mediated degradation in response to ER stress. X-box-binding protein 1, cytoplasmic form and luminal form are produced by intramembrane proteolytic cleavage of ER membrane-anchored isoform 1 triggered by HM13/SPP in a DERL1-RNF139-dependent and VCP/p97-independent manner. X-box-binding protein 1, luminal form is ubiquitinated leading to proteasomal degradation. As to expression, expressed in plasma cells in rheumatoid synovium. Over-expressed in primary breast cancer and metastatic breast cancer cells. Isoform 1 and isoform 2 are expressed at higher level in proliferating as compared to confluent quiescent endothelial cells.

It localises to the endoplasmic reticulum. It is found in the nucleus. The protein resides in the cytoplasm. The protein localises to the endoplasmic reticulum membrane. Its subcellular location is the membrane. Functionally, functions as a transcription factor during endoplasmic reticulum (ER) stress by regulating the unfolded protein response (UPR). Required for cardiac myogenesis and hepatogenesis during embryonic development, and the development of secretory tissues such as exocrine pancreas and salivary gland. Involved in terminal differentiation of B lymphocytes to plasma cells and production of immunoglobulins. Modulates the cellular response to ER stress in a PIK3R-dependent manner. Binds to the cis-acting X box present in the promoter regions of major histocompatibility complex class II genes. Involved in VEGF-induced endothelial cell (EC) proliferation and retinal blood vessel formation during embryonic development but also for angiogenesis in adult tissues under ischemic conditions. Also functions as a major regulator of the UPR in obesity-induced insulin resistance and type 2 diabetes for the management of obesity and diabetes prevention. In terms of biological role, plays a role in the unconventional cytoplasmic splicing processing of its own mRNA triggered by the endoplasmic reticulum (ER) transmembrane endoribonuclease ERN1: upon ER stress, the emerging XBP1 polypeptide chain, as part of a mRNA-ribosome-nascent chain (R-RNC) complex, cotranslationally recruits its own unprocessed mRNA through transient docking to the ER membrane and translational pausing, therefore facilitating efficient IRE1-mediated XBP1 mRNA isoform 2 production. In endothelial cells (EC), associated with KDR, promotes IRE1-mediated XBP1 mRNA isoform 2 productions in a vascular endothelial growth factor (VEGF)-dependent manner, leading to EC proliferation and angiogenesis. Functions as a negative feed-back regulator of the potent transcription factor XBP1 isoform 2 protein levels through proteasome-mediated degradation, thus preventing the constitutive activation of the ER stress response signaling pathway. Inhibits the transactivation activity of XBP1 isoform 2 in myeloma cells. Acts as a weak transcriptional factor. Together with HDAC3, contributes to the activation of NFE2L2-mediated HMOX1 transcription factor gene expression in a PI(3)K/mTORC2/Akt-dependent signaling pathway leading to EC survival under disturbed flow/oxidative stress. Binds to the ER stress response element (ERSE) upon ER stress. Binds to the consensus 5'-GATGACGTG[TG]N(3)[AT]T-3' sequence related to cAMP responsive element (CRE)-like sequences. Binds the Tax-responsive element (TRE) present in the long terminal repeat (LTR) of T-cell leukemia virus type 1 (HTLV-I) and to the TPA response elements (TRE). Associates preferentially to the HDAC3 gene promoter region in a static flow-dependent manner. Binds to the CDH5/VE-cadherin gene promoter region. Functions as a stress-inducible potent transcriptional activator during endoplasmic reticulum (ER) stress by inducing unfolded protein response (UPR) target genes via binding to the UPR element (UPRE). Up-regulates target genes encoding ER chaperones and ER-associated degradation (ERAD) components to enhance the capacity of productive folding and degradation mechanism, respectively, in order to maintain the homeostasis of the ER under ER stress. Plays a role in the production of immunoglobulins and interleukin-6 in the presence of stimuli required for plasma cell differentiation. Induces phospholipid biosynthesis and ER expansion. Contributes to the VEGF-induced endothelial cell (EC) growth and proliferation in a Akt/GSK-dependent and/or -independent signaling pathway, respectively, leading to beta-catenin nuclear translocation and E2F2 gene expression. Promotes umbilical vein EC apoptosis and atherosclerotisis development in a caspase-dependent signaling pathway, and contributes to VEGF-induced EC proliferation and angiogenesis in adult tissues under ischemic conditions. Involved in the regulation of endostatin-induced autophagy in EC through BECN1 transcriptional activation. Plays a role as an oncogene by promoting tumor progression: stimulates zinc finger protein SNAI1 transcription to induce epithelial-to-mesenchymal (EMT) transition, cell migration and invasion of breast cancer cells. Involved in adipocyte differentiation by regulating lipogenic gene expression during lactation. Plays a role in the survival of both dopaminergic neurons of the substantia nigra pars compacta (SNpc), by maintaining protein homeostasis and of myeloma cells. Increases insulin sensitivity in the liver as a response to a high carbohydrate diet, resulting in improved glucose tolerance. Also improves glucose homeostasis in an ER stress- and/or insulin-independent manner through both binding and proteasome-induced degradation of the transcription factor FOXO1, hence resulting in suppression of gluconeogenic genes expression and in a reduction of blood glucose levels. Controls the induction of de novo fatty acid synthesis in hepatocytes by regulating the expression of a subset of lipogenic genes in an ER stress- and UPR-independent manner. Associates preferentially to the HDAC3 gene promoter region in a disturbed flow-dependent manner. Binds to the BECN1 gene promoter region. Binds to the CDH5/VE-cadherin gene promoter region. Binds to the ER stress response element (ERSE) upon ER stress. Binds to the 5'-CCACG-3' motif in the PPARG promoter. In Homo sapiens (Human), this protein is X-box-binding protein 1.